The primary structure comprises 197 residues: Putative peptidyl-prolyl cis-trans isomerase (197 aa).

Positions 14–195 (GEIKVVMHTN…HDVVIESIDV (182 aa)) constitute a PPIase cyclophilin-type domain.

It belongs to the cyclophilin-type PPIase family.

The catalysed reaction is [protein]-peptidylproline (omega=180) = [protein]-peptidylproline (omega=0). Its function is as follows. PPIases accelerate the folding of proteins. It catalyzes the cis-trans isomerization of proline imidic peptide bonds in oligopeptides. In Staphylococcus aureus (strain bovine RF122 / ET3-1), this protein is Putative peptidyl-prolyl cis-trans isomerase.